Reading from the N-terminus, the 444-residue chain is Tubulin beta chain (444 aa).

8 residues coordinate GTP: glutamine 11, glutamate 69, serine 138, glycine 142, threonine 143, glycine 144, asparagine 204, and asparagine 226. Glutamate 69 lines the Mg(2+) pocket.

It belongs to the tubulin family. As to quaternary structure, dimer of alpha and beta chains. A typical microtubule is a hollow water-filled tube with an outer diameter of 25 nm and an inner diameter of 15 nM. Alpha-beta heterodimers associate head-to-tail to form protofilaments running lengthwise along the microtubule wall with the beta-tubulin subunit facing the microtubule plus end conferring a structural polarity. Microtubules usually have 13 protofilaments but different protofilament numbers can be found in some organisms and specialized cells. Mg(2+) is required as a cofactor.

Its subcellular location is the cytoplasm. It is found in the cytoskeleton. Tubulin is the major constituent of microtubules, a cylinder consisting of laterally associated linear protofilaments composed of alpha- and beta-tubulin heterodimers. Microtubules grow by the addition of GTP-tubulin dimers to the microtubule end, where a stabilizing cap forms. Below the cap, tubulin dimers are in GDP-bound state, owing to GTPase activity of alpha-tubulin. The protein is Tubulin beta chain of Trichuris trichiura (Whipworm).